The sequence spans 205 residues: Probable GTP-binding protein EngB (205 aa).

One can recognise an EngB-type G domain in the interval 22–198 (HLPEYAFIGR…LSYIDEVNQD (177 aa)). GTP contacts are provided by residues 30–37 (GRSNVGKS), 57–61 (GKTQL), 75–78 (DLPG), 142–145 (TKAD), and 177–179 (TSA). Mg(2+) contacts are provided by Ser-37 and Thr-59.

It belongs to the TRAFAC class TrmE-Era-EngA-EngB-Septin-like GTPase superfamily. EngB GTPase family. The cofactor is Mg(2+).

Its function is as follows. Necessary for normal cell division and for the maintenance of normal septation. The polypeptide is Probable GTP-binding protein EngB (Flavobacterium psychrophilum (strain ATCC 49511 / DSM 21280 / CIP 103535 / JIP02/86)).